Here is a 557-residue protein sequence, read N- to C-terminus: 2-isopropylmalate synthase (557 aa).

Positions 33-307 (PIWCSSDLRD…DPQLDFSDID (275 aa)) constitute a Pyruvate carboxyltransferase domain. 4 residues coordinate Mg(2+): D42, H246, H248, and N282. Residues 439–557 (ANAPYALVSH…SLSQQQAKAA (119 aa)) are regulatory domain.

Belongs to the alpha-IPM synthase/homocitrate synthase family. LeuA type 2 subfamily. As to quaternary structure, homodimer. It depends on Mg(2+) as a cofactor.

Its subcellular location is the cytoplasm. It carries out the reaction 3-methyl-2-oxobutanoate + acetyl-CoA + H2O = (2S)-2-isopropylmalate + CoA + H(+). It functions in the pathway amino-acid biosynthesis; L-leucine biosynthesis; L-leucine from 3-methyl-2-oxobutanoate: step 1/4. In terms of biological role, catalyzes the condensation of the acetyl group of acetyl-CoA with 3-methyl-2-oxobutanoate (2-ketoisovalerate) to form 3-carboxy-3-hydroxy-4-methylpentanoate (2-isopropylmalate). This is 2-isopropylmalate synthase from Pseudomonas entomophila (strain L48).